The primary structure comprises 527 residues: Splicing factor MUD2 (527 aa).

The interval 36–169 is disordered; it reads DNAVIDTHFK…SKFNGDRDKR (134 aa). Over residues 42-55 the composition is skewed to basic and acidic residues; sequence THFKRQKSDGELPK. S49 carries the phosphoserine modification. A compositionally biased stretch (polar residues) spans 60–85; sequence RNVSHSNNRGPSSIITMSTNRTTYEQ. Over residues 94 to 109 the composition is skewed to basic and acidic residues; sequence SYRDASGRSYNRENRY. Over residues 110 to 122 the composition is skewed to polar residues; it reads SSHNTGPQWNNNP. Basic and acidic residues-rich tracts occupy residues 125 to 141 and 155 to 169; these read RQRDERRGRNERFDRRG and RKNEGSKFNGDRDKR. The region spanning 424–511 is the RRM domain; it reads LLLLNCLDPL…QFNDRTVLCT (88 aa).

MSL5, MUD2 and PRP40 interact to form the commitment complex 2 (CC2), a precursor of mature spliceosomes.

Splicing factor that contacts pre-mRNA directly and is a component of the pre-mRNA-U1 snRNP complex (commitment complex 2) that forms during early spliceosome assembly in yeast extracts. In Saccharomyces cerevisiae (strain ATCC 204508 / S288c) (Baker's yeast), this protein is Splicing factor MUD2 (MUD2).